The following is a 385-amino-acid chain: MKVPIETSPLAWLEAVEQQRRGAGLRRSLRPRSAVATELDLASNDYLGLSQHPDVIDGGVAALRVWGAGATGSRLVTGDTILHHELECELAEFVGACVGLLFSSGYAANLGAVVGLSGPGSLIVSDAYSHASLVDACRLSRARVVVTPHCDVDAVDTALRSCHEERAVVVTESVFSADGVLAPVSELHDVCRRHGALLLVDEAHGLGVRGGGRGLVYEVGLAGAPDVVITTTMSKALGSQGGAVLGSSAVRAHLINTARPFIFDTGLAPAAVGAARAALQILKAETWRPEAVLQHARTLAKICDLSELPQSAVVSVVLGDPEVALAAAIACLDAGVRVGCFRPPTVPAGTSRLRLTAHASLDSAKLEVARRVLTDVLGGCCVARR.

Arg27 is a substrate binding site. 105–106 (GY) serves as a coordination point for pyridoxal 5'-phosphate. His130 serves as a coordination point for substrate. Residues Ser176, 201–204 (DEAH), and 232–235 (TMSK) each bind pyridoxal 5'-phosphate. At Lys235 the chain carries N6-(pyridoxal phosphate)lysine. Residue Thr345 coordinates substrate.

This sequence belongs to the class-II pyridoxal-phosphate-dependent aminotransferase family. BioF subfamily. Homodimer. The cofactor is pyridoxal 5'-phosphate.

It carries out the reaction 6-carboxyhexanoyl-[ACP] + L-alanine + H(+) = (8S)-8-amino-7-oxononanoate + holo-[ACP] + CO2. It functions in the pathway cofactor biosynthesis; biotin biosynthesis. Catalyzes the decarboxylative condensation of pimeloyl-[acyl-carrier protein] and L-alanine to produce 8-amino-7-oxononanoate (AON), [acyl-carrier protein], and carbon dioxide. The polypeptide is 8-amino-7-oxononanoate synthase (Mycobacterium leprae (strain Br4923)).